Reading from the N-terminus, the 302-residue chain is Sulfate adenylyltransferase subunit 2 (302 aa).

It belongs to the PAPS reductase family. CysD subfamily. In terms of assembly, heterodimer composed of CysD, the smaller subunit, and CysN.

The catalysed reaction is sulfate + ATP + H(+) = adenosine 5'-phosphosulfate + diphosphate. Its pathway is sulfur metabolism; hydrogen sulfide biosynthesis; sulfite from sulfate: step 1/3. With CysN forms the ATP sulfurylase (ATPS) that catalyzes the adenylation of sulfate producing adenosine 5'-phosphosulfate (APS) and diphosphate, the first enzymatic step in sulfur assimilation pathway. APS synthesis involves the formation of a high-energy phosphoric-sulfuric acid anhydride bond driven by GTP hydrolysis by CysN coupled to ATP hydrolysis by CysD. This Shewanella pealeana (strain ATCC 700345 / ANG-SQ1) protein is Sulfate adenylyltransferase subunit 2.